The chain runs to 220 residues: Ras-related protein Rab-3A (220 aa).

Residues Ser-31, Ser-32, Val-33, Gly-34, Lys-35, Thr-36, Ser-37, Thr-48, Pro-49, Ser-53, and Thr-54 each contribute to the GTP site. Thr-36 contributes to the Mg(2+) binding site. Positions 49–58 (PAFVSTVGID) match the Switch 1 motif. Mg(2+)-binding residues include Thr-54 and Asp-77. Gly-80 contributes to the GTP binding site. A Switch 2 motif is present at residues 80-96 (GQERYRTITTAYYRGAM). Position 86 is a phosphothreonine; by LRRK2 (Thr-86). GTP-binding residues include Asn-135, Lys-136, Asp-138, Ala-166, and Lys-167. Residues Ser-188 and Ser-190 each carry the phosphoserine modification. Positions 194–220 (ADPAVTGAKQGPQLSDQQVPPHQDCAC) are disordered. Residues Cys-218 and Cys-220 are each lipidated (S-geranylgeranyl cysteine). Cys-220 carries the post-translational modification Cysteine methyl ester.

It belongs to the small GTPase superfamily. Rab family. Interacts with RIMS1 and RIMS2. Interacts with Rabphilin-3A/RPH3A and Rab effector Noc2/RPH3AL. Interacts with SYTL4. Interacts with RAB3IP. Interacts with SGSM1 and SGSM3. Interacts with SYT1. Interacts with MYH9; this interaction is essential for lysosome exocytosis and plasma membrane repair. Interacts with STXBP1; this interaction promotes RAB3A dissociation from the vesicle membrane. Interacts with SNCA. The GTP-bound form interacts with REP15. Interacts with GDI1, GDI2, CHM and CHML; phosphorylation at Thr-86 disrupts these interactions. Interacts with MADD (via uDENN domain); the GTP-bound form is preferred for interaction. Mg(2+) is required as a cofactor. Phosphorylation of Thr-86 in the switch II region by LRRK2 prevents the association of RAB regulatory proteins, including CHM, CHML and RAB GDP dissociation inhibitors GDI1 and GDI2. As to expression, specifically expressed in brain.

It localises to the cytoplasm. The protein resides in the cytosol. The protein localises to the lysosome. It is found in the cytoplasmic vesicle. Its subcellular location is the secretory vesicle. It localises to the cell projection. The protein resides in the axon. The protein localises to the cell membrane. It is found in the presynapse. Its subcellular location is the postsynapse. It catalyses the reaction GTP + H2O = GDP + phosphate + H(+). With respect to regulation, regulated by guanine nucleotide exchange factors (GEFs) including RAB3IL1 and MADD which promote the exchange of bound GDP for free GTP. Regulated by GTPase activating proteins (GAPs) including RAB3GAP1 and TBC1D10B which increase the GTP hydrolysis activity. Inhibited by GDP dissociation inhibitors (GDIs) which prevent Rab-GDP dissociation. Functionally, the small GTPases Rab are key regulators of intracellular membrane trafficking, from the formation of transport vesicles to their fusion with membranes. Rabs cycle between an inactive GDP-bound form and an active GTP-bound form that is able to recruit to membranes different sets of downstream effectors directly responsible for vesicle formation, movement, tethering and fusion. RAB3A plays a central role in regulated exocytosis and secretion. Controls the recruitment, tethering and docking of secretory vesicles to the plasma membrane. Upon stimulation, switches to its active GTP-bound form, cycles to vesicles and recruits effectors such as RIMS1, RIMS2, Rabphilin-3A/RPH3A, RPH3AL or SYTL4 to help the docking of vesicules onto the plasma membrane. Upon GTP hydrolysis by GTPase-activating protein, dissociates from the vesicle membrane allowing the exocytosis to proceed. Stimulates insulin secretion through interaction with RIMS2 or RPH3AL effectors in pancreatic beta cells. Regulates calcium-dependent lysosome exocytosis and plasma membrane repair (PMR) via the interaction with 2 effectors, SYTL4 and myosin-9/MYH9. Acts as a positive regulator of acrosome content secretion in sperm cells by interacting with RIMS1. Also plays a role in the regulation of dopamine release by interacting with synaptotagmin I/SYT. The polypeptide is Ras-related protein Rab-3A (Homo sapiens (Human)).